Consider the following 248-residue polypeptide: Mannose-binding protein C (248 aa).

A signal peptide spans 1-20; it reads MSLFPSLPLLLLSMVAASYS. The Collagen-like domain maps to 42-99; sequence GINGFPGKDGRDGTKGEKGEPGQGLRGLQGPPGKLGPPGNPGPSGSPGAKGQKGDPGA. Residues 43-112 are disordered; sequence INGFPGKDGR…CDSSLANPER (70 aa). A 4-hydroxyproline modification is found at proline 47. Residues 49–61 are compositionally biased toward basic and acidic residues; sequence KDGRDGTKGEKGE. Proline 73, proline 79, proline 82, and proline 88 each carry 4-hydroxyproline. The stretch at 112-130 forms a coiled coil; that stretch reads RKTLQTEINRIKKWVTFSL. Residues 134 to 245 form the C-type lectin domain; it reads VGKKLFLTNG…CSSSHLVICE (112 aa). 2 disulfide bridges follow: cysteine 155-cysteine 244 and cysteine 222-cysteine 236.

Oligomeric complex of 3 or more homotrimers. Interacts with MASP1 and MASP2. Interacts with MEP1A and MEP1B and may inhibit their catalytic activity. Hydroxylation on proline residues within the sequence motif, GXPG, is most likely to be 4-hydroxy as this fits the requirement for 4-hydroxylation in vertebrates.

It is found in the secreted. Functionally, calcium-dependent lectin involved in innate immune defense. Binds mannose, fucose and N-acetylglucosamine on different microorganisms and activates the lectin complement pathway. Binds to late apoptotic cells, as well as to apoptotic blebs and to necrotic cells, but not to early apoptotic cells, facilitating their uptake by macrophages. In Callithrix jacchus (White-tufted-ear marmoset), this protein is Mannose-binding protein C (MBL2).